The sequence spans 327 residues: dTDP-4-dehydrorhamnose reductase (327 aa).

Residues 1–22 form a disordered region; sequence MDLINGMGTSPGYWRTPREPGN. NADH is bound by residues 43-45, 69-70, and 91-93; these read GMV, DI, and AYT. Residues 44 to 45, 69 to 70, and 91 to 93 each bind NADPH; these read MV, DI, and AYT. Residue 132–133 participates in dTDP-beta-L-rhamnose binding; it reads TD. NADH is bound by residues Tyr157 and Lys161. NADPH is bound by residues Tyr157 and Lys161. Tyr157 serves as the catalytic Proton donor/acceptor. Trp182 is a dTDP-beta-L-rhamnose binding site. Residues 264–276 show a composition bias toward basic and acidic residues; it reads PERVRPCGSDRHP. Residues 264-292 form a disordered region; it reads PERVRPCGSDRHPRPAPRPSYTVLSSQRS.

Belongs to the dTDP-4-dehydrorhamnose reductase family. Requires Mg(2+) as cofactor.

It carries out the reaction dTDP-beta-L-rhamnose + NADP(+) = dTDP-4-dehydro-beta-L-rhamnose + NADPH + H(+). It participates in carbohydrate biosynthesis; dTDP-L-rhamnose biosynthesis. Its function is as follows. Involved in the biosynthesis of the dTDP-L-rhamnose which is a component of the critical linker, D-N-acetylglucosamine-L-rhamnose disaccharide, which connects the galactan region of arabinogalactan to peptidoglycan via a phosphodiester linkage. Catalyzes the reduction of dTDP-6-deoxy-L-lyxo-4-hexulose to yield dTDP-L-rhamnose. The polypeptide is dTDP-4-dehydrorhamnose reductase (Mycolicibacterium smegmatis (strain ATCC 700084 / mc(2)155) (Mycobacterium smegmatis)).